Here is a 197-residue protein sequence, read N- to C-terminus: Shikimate kinase (197 aa).

An ATP-binding site is contributed by 14 to 19 (GSGKST). Mg(2+) is bound at residue Ser-18. Substrate is bound by residues Asp-36, Arg-60, and Gly-82. An ATP-binding site is contributed by Arg-120. Arg-147 is a binding site for substrate.

It belongs to the shikimate kinase family. In terms of assembly, monomer. Mg(2+) serves as cofactor.

The protein resides in the cytoplasm. The catalysed reaction is shikimate + ATP = 3-phosphoshikimate + ADP + H(+). It functions in the pathway metabolic intermediate biosynthesis; chorismate biosynthesis; chorismate from D-erythrose 4-phosphate and phosphoenolpyruvate: step 5/7. In terms of biological role, catalyzes the specific phosphorylation of the 3-hydroxyl group of shikimic acid using ATP as a cosubstrate. This Prosthecochloris aestuarii (strain DSM 271 / SK 413) protein is Shikimate kinase.